The sequence spans 322 residues: MSSVGTAEPDGDQRDRHVSKLIFFLFVFGAALLCVGVLLSIFGYQACQYKPLSHCSIVLKIAGPSCAVVGLGAVILARSRARLHLRERQRQGLQDPDQSFFCGESRQFAQCLIFGFLFLTSGMLISILGIWVPGCDSDWAQEPLNETNTGEGEPQICGFLSLQIMGPLVVLVGLCFFVVAHVKKKNNLSSSRDTSEVEGGHAHSTEPVHITVGDSVIIFPPPPPPYFPESSAAAPSPGANSLHQIENPPSYSSLFNYGTPTPENQGAASEREQELIYTISGQGSSSERSYTGHLPLDLPPRYEEKETAPATPLGAPSDASPP.

The next 4 helical transmembrane spans lie at isoleucine 22–phenylalanine 42, isoleucine 57–alanine 77, leucine 112–valine 132, and phenylalanine 159–valine 179. The tract at residues proline 223–proline 322 is disordered. The segment covering proline 228–serine 241 has biased composition (low complexity). Polar residues-rich tracts occupy residues leucine 242–alanine 267 and isoleucine 279–serine 289.

It is found in the membrane. This is Transmembrane protein 171 (Tmem171) from Mus musculus (Mouse).